The sequence spans 261 residues: Cytochrome c oxidase subunit 3 (261 aa).

Residues 1–15 are Mitochondrial matrix-facing; sequence MTHQTHAYHMVNPSP. The chain crosses the membrane as a helical span at residues 16–34; that stretch reads WPLTGALSALLMTSGLAMW. The Mitochondrial intermembrane portion of the chain corresponds to 35–40; that stretch reads FHFNSV. A helical transmembrane segment spans residues 41–66; sequence TLLTLGLTTNMLTMYQWWRDIIREST. At 67–72 the chain is on the mitochondrial matrix side; the sequence is FQGHHT. The chain crosses the membrane as a helical span at residues 73–105; that stretch reads PTVQKGLRYGMILFIISEVLFFTGFFWAFYHSS. At 106–128 the chain is on the mitochondrial intermembrane side; it reads LAPTPELGGCWPPTGISPLNPLE. Residues 129 to 152 form a helical membrane-spanning segment; sequence VPLLNTSVLLASGVSITWAHHSLM. At 153 to 155 the chain is on the mitochondrial matrix side; that stretch reads EGN. The chain crosses the membrane as a helical span at residues 156-183; it reads RNHMLQALFITIALGVYFTLLQASEYYE. The Mitochondrial intermembrane portion of the chain corresponds to 184–190; the sequence is APFTISD. The chain crosses the membrane as a helical span at residues 191–223; the sequence is GIYGSTFFVATGFHGLHVIIGSTFLIVCFFRQL. At 224-232 the chain is on the mitochondrial matrix side; it reads KFHFTSNHH. The chain crosses the membrane as a helical span at residues 233 to 256; the sequence is FGFEAAAWYWHFVDVVWLFLYVSI. Topologically, residues 257-261 are mitochondrial intermembrane; it reads YWWGS.

The protein belongs to the cytochrome c oxidase subunit 3 family. In terms of assembly, component of the cytochrome c oxidase (complex IV, CIV), a multisubunit enzyme composed of 14 subunits. The complex is composed of a catalytic core of 3 subunits MT-CO1, MT-CO2 and MT-CO3, encoded in the mitochondrial DNA, and 11 supernumerary subunits COX4I, COX5A, COX5B, COX6A, COX6B, COX6C, COX7A, COX7B, COX7C, COX8 and NDUFA4, which are encoded in the nuclear genome. The complex exists as a monomer or a dimer and forms supercomplexes (SCs) in the inner mitochondrial membrane with NADH-ubiquinone oxidoreductase (complex I, CI) and ubiquinol-cytochrome c oxidoreductase (cytochrome b-c1 complex, complex III, CIII), resulting in different assemblies (supercomplex SCI(1)III(2)IV(1) and megacomplex MCI(2)III(2)IV(2)).

Its subcellular location is the mitochondrion inner membrane. The enzyme catalyses 4 Fe(II)-[cytochrome c] + O2 + 8 H(+)(in) = 4 Fe(III)-[cytochrome c] + 2 H2O + 4 H(+)(out). Component of the cytochrome c oxidase, the last enzyme in the mitochondrial electron transport chain which drives oxidative phosphorylation. The respiratory chain contains 3 multisubunit complexes succinate dehydrogenase (complex II, CII), ubiquinol-cytochrome c oxidoreductase (cytochrome b-c1 complex, complex III, CIII) and cytochrome c oxidase (complex IV, CIV), that cooperate to transfer electrons derived from NADH and succinate to molecular oxygen, creating an electrochemical gradient over the inner membrane that drives transmembrane transport and the ATP synthase. Cytochrome c oxidase is the component of the respiratory chain that catalyzes the reduction of oxygen to water. Electrons originating from reduced cytochrome c in the intermembrane space (IMS) are transferred via the dinuclear copper A center (CU(A)) of subunit 2 and heme A of subunit 1 to the active site in subunit 1, a binuclear center (BNC) formed by heme A3 and copper B (CU(B)). The BNC reduces molecular oxygen to 2 water molecules using 4 electrons from cytochrome c in the IMS and 4 protons from the mitochondrial matrix. In Neotragus moschatus (Suni), this protein is Cytochrome c oxidase subunit 3 (MT-CO3).